A 456-amino-acid polypeptide reads, in one-letter code: Cysteine--tRNA ligase (456 aa).

Residue Cys-28 coordinates Zn(2+). The 'HIGH' region signature appears at 30-40 (ITVYDHCHLGH). Residues Cys-209, His-234, and Glu-238 each contribute to the Zn(2+) site. The 'KMSKS' region signature appears at 266 to 270 (KMAKS). ATP is bound at residue Lys-269.

Belongs to the class-I aminoacyl-tRNA synthetase family. Monomer. The cofactor is Zn(2+).

Its subcellular location is the cytoplasm. It carries out the reaction tRNA(Cys) + L-cysteine + ATP = L-cysteinyl-tRNA(Cys) + AMP + diphosphate. The polypeptide is Cysteine--tRNA ligase (Legionella pneumophila (strain Corby)).